Consider the following 277-residue polypeptide: Bifunctional protein FolD (277 aa).

NADP(+) is bound by residues 159-161 (GRS), serine 184, and isoleucine 225.

Belongs to the tetrahydrofolate dehydrogenase/cyclohydrolase family. Homodimer.

The catalysed reaction is (6R)-5,10-methylene-5,6,7,8-tetrahydrofolate + NADP(+) = (6R)-5,10-methenyltetrahydrofolate + NADPH. It catalyses the reaction (6R)-5,10-methenyltetrahydrofolate + H2O = (6R)-10-formyltetrahydrofolate + H(+). The protein operates within one-carbon metabolism; tetrahydrofolate interconversion. In terms of biological role, catalyzes the oxidation of 5,10-methylenetetrahydrofolate to 5,10-methenyltetrahydrofolate and then the hydrolysis of 5,10-methenyltetrahydrofolate to 10-formyltetrahydrofolate. This Acholeplasma laidlawii (strain PG-8A) protein is Bifunctional protein FolD.